A 244-amino-acid chain; its full sequence is Triosephosphate isomerase (244 aa).

9 to 11 (NWK) serves as a coordination point for substrate. The Electrophile role is filled by His93. The active-site Proton acceptor is the Glu161. Substrate is bound by residues Gly167, Ser206, and 227 to 228 (GG).

This sequence belongs to the triosephosphate isomerase family. As to quaternary structure, homodimer.

The protein localises to the cytoplasm. The enzyme catalyses D-glyceraldehyde 3-phosphate = dihydroxyacetone phosphate. The protein operates within carbohydrate biosynthesis; gluconeogenesis. Its pathway is carbohydrate degradation; glycolysis; D-glyceraldehyde 3-phosphate from glycerone phosphate: step 1/1. Involved in the gluconeogenesis. Catalyzes stereospecifically the conversion of dihydroxyacetone phosphate (DHAP) to D-glyceraldehyde-3-phosphate (G3P). This chain is Triosephosphate isomerase, found in Deinococcus geothermalis (strain DSM 11300 / CIP 105573 / AG-3a).